Reading from the N-terminus, the 209-residue chain is Mitochondrial import inner membrane translocase subunit Tim23 (209 aa).

Helical transmembrane passes span 73-93, 125-145, and 181-197; these read FELA…FGAM, ALWA…GVII, and GLAG…YNNW.

Belongs to the Tim17/Tim22/Tim23 family. In terms of assembly, component of the TIM23 complex at least composed of TIMM23, TIMM17 (TIMM17A or TIMM17B) and TIMM50; within this complex, directly interacts with TIMM50. The complex interacts with the TIMM44 component of the PAM complex and with DNAJC15. Upon mitochondrial depolarization, interacts with PINK1; the interaction is required for PINK1 accumulation at the outer mitochondrial membrane, kinase activation by autophosphorylation and PRKN recruitement to mitochondria.

The protein localises to the mitochondrion inner membrane. Its function is as follows. Essential component of the TIM23 complex, a complex that mediates the translocation of transit peptide-containing proteins across the mitochondrial inner membrane. Has a role in the activation of stress-induced mitophagy by protecting PINK1 from OMA1-mediated degradation and facilitating its accumulation at the outer mitochondrial membrane in response to depolarization. The sequence is that of Mitochondrial import inner membrane translocase subunit Tim23 (Timm23) from Mus musculus (Mouse).